Here is a 617-residue protein sequence, read N- to C-terminus: UvrABC system protein C (617 aa).

Residues 22–100 (KLPGVYRFFD…IKALSPKYNI (79 aa)) enclose the GIY-YIG domain. Residues 209–244 (DELTRTLQHKMQTAAANLQFEEAARYRDQIQALGII) form the UVR domain.

Belongs to the UvrC family. As to quaternary structure, interacts with UvrB in an incision complex.

It is found in the cytoplasm. The UvrABC repair system catalyzes the recognition and processing of DNA lesions. UvrC both incises the 5' and 3' sides of the lesion. The N-terminal half is responsible for the 3' incision and the C-terminal half is responsible for the 5' incision. In Neisseria gonorrhoeae (strain ATCC 700825 / FA 1090), this protein is UvrABC system protein C.